The following is a 1435-amino-acid chain: MAKKTKNNSKSSTPVNDVPTTAGKKKAKGKKGQEPEPEDDKRAKQQSNRAKVTSTASWTGKLPHTILHETCQKRKWNKVEYDMKKIGDKGFIAIAVLSFTDPKTKETLTARMNDPTYDKASGKGLVIPQETPIEARHMASTIALYRIAYNTNLHMMLPPNHRKTWYALDDFRKDNLKTDEKRINKLFDLDPFKTMVEDRKLKAQREKEQVAQNNQAQKEQVARTILSSHGGISSSGKDRQERKVASHKNSHNPSLVRFPKKVWENSIFVDLDESSRQLIETSLKEKIDWQAKKISHKNETIAENREDLKAKLLTLQFRPKHVEEAMLYKDPLSFLLFNLPEDDLPPFFHKKKGDTKNKVEITNLPLSTRMIVERLTEIGVSSDEALLALQQNDMNENEAAGFLTREILPTLNSNTNEPVSETESIECWNQELESLESIYEGCVMDAKEDSHYTLNLIEKLKIKLKVYRTKNYPASLPGIVVSTFDKNYKLPDYIKKQILTRLLHYLQEGNLIGDMLVYHIYEWLKENISKIIDNPGPLIPDSDSKGAINKRNISNGKRSINNSSSRKFTKTTISEDTLSVLREEYTKRIKSSEYKSMQLVREQLPAWKKQKVIIDIINKNEVVLITGETGSGKSTQVVQFILDFLQKEKGDFGKTKIVCTQPRRISAIGLAERVSDERCVTCGEEVGYVIRGVNKTKASTRIKFMTTGVLVRLLQNARTMLENTIVVIDEVHERSIDTDLIVTLMKNLLHRVRGMKIVLMSATVNVDLFKKFFPGLATCHIEGRTFPITDYFLEDILSDLDFKIKREKALSYDDDSVDERNNDDQYLKPRADSKFFTSGQINYDLLCQVVEYVHKRLKAANDNGSIIVFLPGVGEINKCCNLLANKSNEADFMVLPLHSALTPEDQKRVFKKYHGKRKVVVSTNIAETSITIDDCVATIDTGRAKSMFYNPKDNTTKLIESFISKAEVKQRRGRAGRVREGLSYKLFSKNLYENDMISMPIPEIKRIPLESLYLSVKAMGIKDVKAFLSTALDAPPLPALQKAERILTTIGLVDESDKSLTQLGQFISLMPVMDSKHGKLLIYGILFGCTDISVLLVSILGIGVLPFIGGFENREKIKKLLCKYESRGDLFAVLEIVRDYFKIKDSSIKRKYLRDNLLSYNKINEIKSSTAQYYSILKDVGFLPMDYKVGSISDLNRNERNFDILRAILTGAFYPHIARVQLPDVKYLSTSSGAVEKDPEAKMIKYWIRSEEYQDKLEEYKTKISQETQKVDLEDLPLPATRAFIHPSSVLFSTNSVNLEDAKLLSEVDGPISRQSKIPTVVKYPFVLFTTSQVTNKLYLRDLTPTTTLSLLLFGGAISYDIGGTIHSPGIVVDNWLPIRTWCKNGVLIKELRTQLDEAIRKKLESPDYAKKSQIDNSGADKTLKIVEKIIASEQ.

Disordered stretches follow at residues 1-57 and 226-251; these read MAKK…STAS and LSSHGGISSSGKDRQERKVASHKNSH. Serine 9 is subject to Phosphoserine. Basic and acidic residues predominate over residues 31–43; that stretch reads KGQEPEPEDDKRA. Over residues 45–57 the composition is skewed to polar residues; the sequence is QQSNRAKVTSTAS. The region spanning 365–406 is the UBA domain; sequence PLSTRMIVERLTEIGVSSDEALLALQQNDMNENEAAGFLTRE. The RWD domain occupies 430-531; that stretch reads QELESLESIY…EWLKENISKI (102 aa). A disordered region spans residues 543 to 566; that stretch reads DSKGAINKRNISNGKRSINNSSSR. Polar residues predominate over residues 551–566; sequence RNISNGKRSINNSSSR. The 169-residue stretch at 614–782 folds into the Helicase ATP-binding domain; sequence IDIINKNEVV…FPGLATCHIE (169 aa). ATP is bound at residue 627-634; it reads GETGSGKS. A DEAH box motif is present at residues 729 to 732; sequence DEVH. Position 816 is a phosphoserine (serine 816). The Helicase C-terminal domain occupies 845-1020; that stretch reads LLCQVVEYVH…SLYLSVKAMG (176 aa).

It belongs to the DEAD box helicase family. DEAH subfamily.

It localises to the cytoplasm. It carries out the reaction ATP + H2O = ADP + phosphate + H(+). Its function is as follows. Probable ATP-binding RNA helicase. The chain is Putative ATP-dependent RNA helicase YLR419W from Saccharomyces cerevisiae (strain ATCC 204508 / S288c) (Baker's yeast).